Reading from the N-terminus, the 116-residue chain is Beta-2-microglobulin (116 aa).

The N-terminal stretch at 1–19 (MKFLLSFVVLAVFSASAFA) is a signal peptide. The 88-residue stretch at 24–111 (PKIQVYSRNP…RHLKETKNIS (88 aa)) folds into the Ig-like C1-type domain. A disulfide bond links C44 and C99.

It belongs to the beta-2-microglobulin family. Heterodimer of an alpha chain and a beta chain. Beta-2-microglobulin is the beta-chain of major histocompatibility complex class I molecules.

It is found in the secreted. Functionally, component of the class I major histocompatibility complex (MHC). Involved in the presentation of peptide antigens to the immune system. In Ictalurus punctatus (Channel catfish), this protein is Beta-2-microglobulin (b2m).